The primary structure comprises 152 residues: Em-like protein GEA1 (152 aa).

Basic and acidic residues-rich tracts occupy residues methionine 1 to glutamine 17 and glutamate 32 to lysine 63. The segment at methionine 1–lysine 63 is disordered. Tandem repeats lie at residues glycine 44–lysine 63, glycine 64–lysine 83, glycine 84–lysine 103, and glycine 104–lysine 123. A 4 X 20 AA tandem repeats region spans residues glycine 44–lysine 123. The disordered stretch occupies residues glycine 116 to lysine 152.

The protein belongs to the small hydrophilic plant seed protein family. As to expression, in seeds only. Specifically located to vascular bundles in the cotyledon and axis of the dry seed. Also found in the epiderm and outer layers of the cortex in the embryo axis.

Its function is as follows. It is thought to provide protection for the cytoplasm during the desiccation stage of embryo development. The chain is Em-like protein GEA1 (EM1) from Arabidopsis thaliana (Mouse-ear cress).